Reading from the N-terminus, the 169-residue chain is Shikimate kinase (169 aa).

12–17 (GCGKST) is a binding site for ATP. Residue S16 coordinates Mg(2+). The substrate site is built by D34, R57, and G79. R116 is a binding site for ATP. R133 lines the substrate pocket.

It belongs to the shikimate kinase family. In terms of assembly, monomer. Requires Mg(2+) as cofactor.

The protein localises to the cytoplasm. The enzyme catalyses shikimate + ATP = 3-phosphoshikimate + ADP + H(+). It participates in metabolic intermediate biosynthesis; chorismate biosynthesis; chorismate from D-erythrose 4-phosphate and phosphoenolpyruvate: step 5/7. Catalyzes the specific phosphorylation of the 3-hydroxyl group of shikimic acid using ATP as a cosubstrate. This chain is Shikimate kinase, found in Clostridium beijerinckii (strain ATCC 51743 / NCIMB 8052) (Clostridium acetobutylicum).